An 867-amino-acid polypeptide reads, in one-letter code: Alanine--tRNA ligase (867 aa).

Zn(2+) is bound by residues His-556, His-560, Cys-658, and His-662.

Belongs to the class-II aminoacyl-tRNA synthetase family. Zn(2+) serves as cofactor.

It is found in the cytoplasm. It catalyses the reaction tRNA(Ala) + L-alanine + ATP = L-alanyl-tRNA(Ala) + AMP + diphosphate. In terms of biological role, catalyzes the attachment of alanine to tRNA(Ala) in a two-step reaction: alanine is first activated by ATP to form Ala-AMP and then transferred to the acceptor end of tRNA(Ala). Also edits incorrectly charged Ser-tRNA(Ala) and Gly-tRNA(Ala) via its editing domain. In Fusobacterium nucleatum subsp. nucleatum (strain ATCC 25586 / DSM 15643 / BCRC 10681 / CIP 101130 / JCM 8532 / KCTC 2640 / LMG 13131 / VPI 4355), this protein is Alanine--tRNA ligase.